The primary structure comprises 251 residues: 2,3-bisphosphoglycerate-dependent phosphoglycerate mutase (251 aa).

Substrate is bound by residues 11 to 18 (RHGNSDWN), 24 to 25 (TG), Arg63, 90 to 93 (ERHY), Lys101, 117 to 118 (RR), and 185 to 186 (GN). The Tele-phosphohistidine intermediate role is filled by His12. Residue Glu90 is the Proton donor/acceptor of the active site.

This sequence belongs to the phosphoglycerate mutase family. BPG-dependent PGAM subfamily.

It catalyses the reaction (2R)-2-phosphoglycerate = (2R)-3-phosphoglycerate. Its pathway is carbohydrate degradation; glycolysis; pyruvate from D-glyceraldehyde 3-phosphate: step 3/5. Functionally, catalyzes the interconversion of 2-phosphoglycerate and 3-phosphoglycerate. The chain is 2,3-bisphosphoglycerate-dependent phosphoglycerate mutase from Clavibacter sepedonicus (Clavibacter michiganensis subsp. sepedonicus).